We begin with the raw amino-acid sequence, 228 residues long: Carboxylesterase SOBER1 (228 aa).

Active-site charge relay system residues include Ser-106, Asp-160, and His-192.

Belongs to the AB hydrolase superfamily. AB hydrolase 2 family.

Possesses carboxylesterase activity in vitro with a preference for short acyl chain substrates. Functions as a negative regulator of the hypersensitive response (HR) triggered by the bacterial type III effector protein AvrBsT. Possesses phospholipase A2 (PLA2) activity and hydrolyzes phosphatidylcholine (PC), a lipid that is hydrolyzed by phospholipase D (PLD) to produce phosphatidic acid (PA). Required to suppress AvrBsT-dependent HR and PLD-dependent production of PA in response to AvrBsT elicitation. In Arabidopsis thaliana (Mouse-ear cress), this protein is Carboxylesterase SOBER1.